We begin with the raw amino-acid sequence, 117 residues long: Hainantoxin-XV-3 (117 aa).

The N-terminal stretch at M1 to S20 is a signal peptide. The interval S20 to E55 is disordered. Residues S21–R56 constitute a propeptide that is removed on maturation. The segment covering N23 to E55 has biased composition (basic and acidic residues). 4 disulfides stabilise this stretch: C58–C72, C65–C78, C69–C115, and C71–C91.

This sequence belongs to the neurotoxin 03 (Tx2) family. 02 subfamily. HNTX-XV sub-subfamily. As to expression, expressed by the venom gland.

It localises to the secreted. In terms of biological role, putative ion channel inhibitor. This Cyriopagopus hainanus (Chinese bird spider) protein is Hainantoxin-XV-3.